The following is a 299-amino-acid chain: 4-hydroxy-tetrahydrodipicolinate synthase (299 aa).

Threonine 44 provides a ligand contact to pyruvate. Tyrosine 133 serves as the catalytic Proton donor/acceptor. Residue lysine 162 is the Schiff-base intermediate with substrate of the active site. Residue isoleucine 204 participates in pyruvate binding.

Belongs to the DapA family. As to quaternary structure, homotetramer; dimer of dimers.

It localises to the cytoplasm. The enzyme catalyses L-aspartate 4-semialdehyde + pyruvate = (2S,4S)-4-hydroxy-2,3,4,5-tetrahydrodipicolinate + H2O + H(+). It functions in the pathway amino-acid biosynthesis; L-lysine biosynthesis via DAP pathway; (S)-tetrahydrodipicolinate from L-aspartate: step 3/4. Functionally, catalyzes the condensation of (S)-aspartate-beta-semialdehyde [(S)-ASA] and pyruvate to 4-hydroxy-tetrahydrodipicolinate (HTPA). The polypeptide is 4-hydroxy-tetrahydrodipicolinate synthase (Thermus thermophilus (strain ATCC BAA-163 / DSM 7039 / HB27)).